The sequence spans 342 residues: Homocysteine S-methyltransferase 4 (342 aa).

Residues 13–328 (ALRGFVREAG…ATVRAIARAV (316 aa)) form the Hcy-binding domain. Residues Cys245, Cys313, and Cys314 each coordinate Zn(2+).

In terms of assembly, monomer. Requires Zn(2+) as cofactor.

It carries out the reaction S-methyl-L-methionine + L-homocysteine = 2 L-methionine + H(+). In terms of biological role, catalyzes methyl transfer from S-methylmethionine (SMM) to adenosyl-L-homocysteine (AdoMet). SMM degradation (by HMT-1, HMT-2, HMT-3 and HMT-4) and biosynthesis (by MMT1) constitute the SMM cycle in plants, which is probably required to achieve short term control of AdoMet level. In Zea mays (Maize), this protein is Homocysteine S-methyltransferase 4 (HMT-4).